The chain runs to 338 residues: tRNA-cytidine(32) 2-sulfurtransferase (338 aa).

The PP-loop motif motif lies at 86-91 (SGGKDS). Cys-161, Cys-164, and Cys-252 together coordinate [4Fe-4S] cluster.

Belongs to the TtcA family. In terms of assembly, homodimer. It depends on Mg(2+) as a cofactor. [4Fe-4S] cluster is required as a cofactor.

It is found in the cytoplasm. It carries out the reaction cytidine(32) in tRNA + S-sulfanyl-L-cysteinyl-[cysteine desulfurase] + AH2 + ATP = 2-thiocytidine(32) in tRNA + L-cysteinyl-[cysteine desulfurase] + A + AMP + diphosphate + H(+). The protein operates within tRNA modification. Functionally, catalyzes the ATP-dependent 2-thiolation of cytidine in position 32 of tRNA, to form 2-thiocytidine (s(2)C32). The sulfur atoms are provided by the cysteine/cysteine desulfurase (IscS) system. This is tRNA-cytidine(32) 2-sulfurtransferase from Albidiferax ferrireducens (strain ATCC BAA-621 / DSM 15236 / T118) (Rhodoferax ferrireducens).